Here is a 1040-residue protein sequence, read N- to C-terminus: Chromatin modification-related protein rik1 (1040 aa).

The protein belongs to the DDB1 family. As to quaternary structure, component of the Clr4 methyltransferase complex (ClrC) composed of at least clr4, rik1, pcu4, rbx1, raf1 and raf2. The cullin pcu4, rik1, raf1, raf2 and the ring-box protein rbx1 are components of an E3 ubiquitin ligase, whose activity is essential for heterochromatin assembly.

The protein localises to the nucleus. It localises to the cytoplasm. Its subcellular location is the cytoskeleton. The protein resides in the microtubule organizing center. It is found in the spindle pole body. The protein localises to the chromosome. Component of the Clr4 methyltransferase complex (ClrC) which contributes to the establishment of heterochromatin by specifically methylating histone H3 to form H3K9me. ClrC preferentially ubiquitylates H3K14 and ClrC-mediated H3 ubiquitination promotes clr4 methyltransferase activity for the methylation of H3K9. H3K9me represents a specific tag for epigenetic transcriptional repression by recruiting swi6/HP1 to methylated histones which leads to transcriptional silencing within centromeric heterochromatin, telomeric regions and at the silent mating-type loci. Rik1 is involved in the RNAi-mediated targeting of ClrC to heterochromatic repeat elements. Rik1 also has a function in meiotic telomere clustering. This Schizosaccharomyces pombe (strain 972 / ATCC 24843) (Fission yeast) protein is Chromatin modification-related protein rik1 (rik1).